A 1322-amino-acid polypeptide reads, in one-letter code: BRCA2-interacting transcriptional repressor EMSY (1322 aa).

Positions 1–478 (MPVVWPTLLD…LPKPVTATLP (478 aa)) are interaction with BRCA2. The region spanning 16-100 (CKRILRKLEL…EWSIEGRRLV (85 aa)) is the ENT domain. An interaction with ZMYND11 region spans residues 104–108 (PRLVP). Over residues 148–162 (STTSTPTSTPVPSGS) the composition is skewed to low complexity. 2 disordered regions span residues 148–178 (STTSTPTSTPVPSGSIATVKSPRPASPASNV) and 192–215 (VSCSDEDEKPRKRRRTNSSSSSPV). Thr-207 carries the phosphothreonine modification. Phosphoserine occurs at positions 209 and 213. O-linked (GlcNAc) serine glycans are attached at residues Ser-228 and Ser-236. Ser-238 carries the post-translational modification Phosphoserine. An O-linked (GlcNAc) threonine glycan is attached at Thr-271. Residues 417 to 437 (QQTQQQVAQPSPVSHQQQPQQ) are compositionally biased toward low complexity. The interval 417–444 (QQTQQQVAQPSPVSHQQQPQQSPLPPGI) is disordered. O-linked (GlcNAc) threonine glycosylation is found at Thr-501 and Thr-506. O-linked (GlcNAc) serine glycosylation is present at Ser-557. The span at 698–707 (VAEAGNSSIQ) shows a compositional bias: polar residues. The interval 698–736 (VAEAGNSSIQEGKEEPQNYTDSSSSSTESSQSSQDSQPV) is disordered. Positions 717–734 (TDSSSSSTESSQSSQDSQ) are enriched in low complexity. Ser-818 and Ser-821 each carry phosphoserine. Thr-1120 carries O-linked (GlcNAc) threonine glycosylation. Ser-1136 bears the Phosphoserine mark. Positions 1205 to 1223 (QKCRESCSSPSTVGSSLTT) are enriched in polar residues. 2 disordered regions span residues 1205–1231 (QKCRESCSSPSTVGSSLTTRKIDPPAV) and 1290–1322 (QLDDEETAMEQDIDSSTEDGTEPSPSQSSAERS). A compositionally biased stretch (acidic residues) spans 1291–1310 (LDDEETAMEQDIDSSTEDGT). Positions 1312–1322 (PSPSQSSAERS) are enriched in polar residues.

As to quaternary structure, homodimer. Interacts with the transactivation domain of BRCA2. Interacts with CBX1 (via chromoshadow domain). Interacts with ZMYND11. Does not interact with CBX3 or CBX5. Component of a nuclear receptor-mediated transcription complex composed of at least ZNF335, CCAR2 and EMSY; the complex stimulates the transcription of nuclear receptor target genes such as SOX9 and HOXA1. Within the complex interacts with CCAR2 and ZNF335. Components of this complex may associate with components of a histone methylation complex to form a complex at least composed of ZNF335, HCFC1, CCAR2, EMSY, MKI67, RBBP5, ASH2L and WDR5. Within this complex, interacts with ASH2L and RBBP5. In terms of processing, O-glycosylated during cytokinesis at sites identical or close to phosphorylation sites, this interferes with the phosphorylation status.

The protein resides in the nucleus. In terms of biological role, regulator which is able to repress transcription, possibly via its interaction with a multiprotein chromatin remodeling complex that modifies the chromatin. Its interaction with BRCA2 suggests that it may play a central role in the DNA repair function of BRCA2. Mediates ligand-dependent transcriptional activation by nuclear hormone receptors. This chain is BRCA2-interacting transcriptional repressor EMSY, found in Homo sapiens (Human).